The following is a 124-amino-acid chain: Vicilin, 14 kDa component (124 aa).

The segment at 23–57 (LSKNAKSSSRRSVSSESGPFNLRSEDPLYSNNSGK) is disordered. N53 carries an N-linked (GlcNAc...) asparagine glycan.

This sequence belongs to the 7S seed storage protein family.

The protein localises to the vacuole. It localises to the aleurone grain. In terms of biological role, seed storage protein. This chain is Vicilin, 14 kDa component, found in Pisum sativum (Garden pea).